The primary structure comprises 504 residues: ATP synthase subunit alpha, chloroplastic (504 aa).

Position 170 to 177 (170 to 177 (GDRQTGKT)) interacts with ATP.

This sequence belongs to the ATPase alpha/beta chains family. As to quaternary structure, F-type ATPases have 2 components, CF(1) - the catalytic core - and CF(0) - the membrane proton channel. CF(1) has five subunits: alpha(3), beta(3), gamma(1), delta(1), epsilon(1). CF(0) has four main subunits: a, b, b' and c.

It is found in the plastid. The protein resides in the chloroplast thylakoid membrane. It catalyses the reaction ATP + H2O + 4 H(+)(in) = ADP + phosphate + 5 H(+)(out). Its function is as follows. Produces ATP from ADP in the presence of a proton gradient across the membrane. The alpha chain is a regulatory subunit. In Jasminum nudiflorum (Winter jasmine), this protein is ATP synthase subunit alpha, chloroplastic.